Consider the following 465-residue polypeptide: Iron-sulfur cluster assembly SufBD family protein SE_0610 (465 aa).

Belongs to the iron-sulfur cluster assembly SufBD family.

This Staphylococcus epidermidis (strain ATCC 12228 / FDA PCI 1200) protein is Iron-sulfur cluster assembly SufBD family protein SE_0610.